Consider the following 323-residue polypeptide: Serine/threonine-protein phosphatase PP1-gamma catalytic subunit B (323 aa).

D64, H66, D92, and N124 together coordinate Mn(2+). Residue H125 is the Proton donor of the active site. Mn(2+)-binding residues include H173 and H248. The disordered stretch occupies residues 301–323; it reads KKKPNASRPVTPPRGIITKQAKK.

Belongs to the PPP phosphatase family. PP-1 subfamily. PP1 comprises a catalytic subunit, ppp1c1, ppp1cb or ppp1cc, which is folded into its native form by inhibitor 2 and glycogen synthetase kinase 3, and then is complexed to one or several targeting or regulatory subunits. It depends on Mn(2+) as a cofactor.

The protein localises to the cytoplasm. It localises to the nucleus. Its subcellular location is the cleavage furrow. It is found in the nucleolus. The protein resides in the nucleoplasm. The protein localises to the chromosome. It localises to the centromere. Its subcellular location is the kinetochore. It is found in the nucleus speckle. The protein resides in the midbody. The protein localises to the mitochondrion. It catalyses the reaction O-phospho-L-seryl-[protein] + H2O = L-seryl-[protein] + phosphate. The enzyme catalyses O-phospho-L-threonyl-[protein] + H2O = L-threonyl-[protein] + phosphate. Its function is as follows. Protein phosphatase that associates with over 200 regulatory proteins to form highly specific holoenzymes which dephosphorylate hundreds of biological targets. Protein phosphatase 1 (PP1) is essential for cell division, and participates in the regulation of glycogen metabolism, muscle contractility and protein synthesis. Promotes nuclear envelope reassembly by targeting nuclear membrane vesicles to chromatin at the end of mitosis. Acts by dephosphorylating membrane proteins such as lamin B receptor (lbr) to regulate the binding of membrane proteins to chromatin. The chain is Serine/threonine-protein phosphatase PP1-gamma catalytic subunit B (ppp1cc-b) from Xenopus laevis (African clawed frog).